The primary structure comprises 237 residues: 3-oxoacyl-[acyl-carrier-protein] reductase (237 aa).

Met-1 bears the N-acetylmethionine mark. NADP(+)-binding positions include 11–14 and 34–35; these read SRGI and RN. Lys-40 carries the N6-acetyllysine modification. Residues Asp-56 and 83 to 85 contribute to the NADP(+) site; that span reads AAG. Lys-96 carries the post-translational modification N6-acetyllysine. Ser-135 contributes to the substrate binding site. Residues Tyr-148, Lys-152, and 181-183 contribute to the NADP(+) site; that span reads VHT. Residue Tyr-148 is the Proton acceptor of the active site. Position 195 is an N6-acetyllysine (Lys-195).

This sequence belongs to the short-chain dehydrogenases/reductases (SDR) family. As to quaternary structure, homotetramer (in vitro). Heterotetramer with HSD17B8; contains two molecules each of HSD17B8 and CBR4. Does not form homotetramers when HSD17B8 is coexpressed, only heterotetramers (in vitro). Detected in liver and kidney (at protein level). Displays the highest expression in neuronal and muscle tissues.

It is found in the mitochondrion matrix. It catalyses the reaction a (3R)-hydroxyacyl-[ACP] + NADP(+) = a 3-oxoacyl-[ACP] + NADPH + H(+). The enzyme catalyses a quinone + NADPH + H(+) = a quinol + NADP(+). It participates in lipid metabolism; fatty acid biosynthesis. Its function is as follows. Component of the heterotetramer complex KAR (3-ketoacyl-[acyl carrier protein] reductase or 3-ketoacyl-[ACP] reductase) that forms part of the mitochondrial fatty acid synthase (mtFAS). Beta-subunit of the KAR heterotetramer complex, responsible for the 3-ketoacyl-ACP reductase activity of the mtFAS, reduces 3-oxoacyl-[ACP] to (3R)-hydroxyacyl-[ACP] in a NADPH-dependent manner with no chain length preference, thereby participating in mitochondrial fatty acid biosynthesis. The homotetramer has NADPH-dependent quinone reductase activity (in vitro), hence could play a role in protection against cytotoxicity of exogenous quinones. As a heterotetramer, it can also reduce 9,10-phenanthrenequinone, 1,4-benzoquinone and various other o-quinones and p-quinones (in vitro). The polypeptide is 3-oxoacyl-[acyl-carrier-protein] reductase (CBR4) (Homo sapiens (Human)).